The chain runs to 489 residues: Bridging integrator 2 (489 aa).

The BAR domain occupies 28–244 (VLQKLGKTVE…MSKLEKQHSN (217 aa)). Residues 267–302 (QSCAASSPVSPVSPVSPVTSPTSPSATSEPESVSAT) show a composition bias toward low complexity. The tract at residues 267 to 489 (QSCAASSPVS…ASGGLVGLFL (223 aa)) is disordered. Position 273 is a phosphoserine (S273). A compositionally biased stretch (acidic residues) spans 311-331 (GGEDSCESQESLKDEEADEAQ). S357 is modified (phosphoserine). Low complexity predominate over residues 358–368 (QEEALSSSAQS). Phosphoserine occurs at positions 380, 392, 420, 422, 424, 430, 435, 439, and 443.

In terms of assembly, homodimer. Interacts with BIN1. Interacts with ARHGEF6 (via SH3 domain), ARHGEF7 (via SH3 domain), SH3GL1, SH3GL2 and SH3GL3. Identified in a complex with ARHGEF6 and GIT2.

It localises to the cytoplasm. Its subcellular location is the cell projection. It is found in the podosome membrane. The protein resides in the cell cortex. The protein localises to the phagocytic cup. Its function is as follows. Promotes cell motility and migration, probably via its interaction with the cell membrane and with podosome proteins that mediate interaction with the cytoskeleton. Modulates membrane curvature and mediates membrane tubulation. Inhibits phagocytosis. Plays a role in podosome formation. In Mus musculus (Mouse), this protein is Bridging integrator 2 (Bin2).